The sequence spans 250 residues: Histone H1.2 (250 aa).

Residues 1–11 are compositionally biased toward polar residues; the sequence is MSDSAVATSAS. Disordered stretches follow at residues 1–53 and 101–250; these read MSDS…QMVD and KLIQ…ATKK. Positions 27 to 42 are enriched in low complexity; it reads KKAAATPKSKKSTAAP. Residues 44–118 form the H15 domain; the sequence is SHPPTQQMVD…GASGSFKLSR (75 aa). The segment covering 120 to 133 has biased composition (basic and acidic residues); that stretch reads AKKDPKPKASAVEK. Positions 151 to 161 are enriched in low complexity; the sequence is STSTTKKAAGA. A compositionally biased stretch (basic and acidic residues) spans 174 to 191; it reads KSVEKKRADKAKAKDAKK. Residues 192-211 are compositionally biased toward low complexity; sequence TGTIKAKPTTAKAKSSATKP. Basic residues-rich tracts occupy residues 212–225 and 235–250; these read KTPKPKTKSAKPKK and TAVKKPKAKTASATKK.

This sequence belongs to the histone H1/H5 family.

It is found in the nucleus. The protein localises to the chromosome. In terms of biological role, histones H1 are necessary for the condensation of nucleosome chains into higher-order structures. The polypeptide is Histone H1.2 (His1.2) (Drosophila virilis (Fruit fly)).